The primary structure comprises 85 residues: RDS3 complex subunit 10 (85 aa).

In terms of assembly, belongs to the SF3b complex composed of CUS1, HSH49, HSH155, RCP1, RDS3 and RSE1.

It localises to the nucleus. Functionally, involved in pre-mRNA splicing. Required for the SF3b integrity and prespliceosome assembly. The sequence is that of RDS3 complex subunit 10 (YSF3) from Saccharomyces cerevisiae (strain ATCC 204508 / S288c) (Baker's yeast).